The sequence spans 255 residues: MEVYLMVRIMLVGCNGKMGRIITHCSKDFNDIEIVAGVDKSSTSNLDFPVFENIHSSSVECDVVLDFSRPSSLKSLISYCTEKKLPLVLCTTGYSKEELNLIEETSKNIPIFKSANMSIGINVINSLLKDISKKLYKDFDIEIIEKHHNQKVDSPSGTALLLADTIKDNVPEKLEYIYGRSGHSKRTKNEIGIHAIRGGSIVGDHDVIFAGIGECIEIKHTAISREVFAIGALKASAFMKGKPSGMYNMDCMLNS.

Residues 13 to 18 (GCNGKM), 90 to 92 (CTT), and 114 to 117 (SANM) contribute to the NAD(+) site. The Proton donor/acceptor role is filled by His-147. A (S)-2,3,4,5-tetrahydrodipicolinate-binding site is contributed by His-148. The active-site Proton donor is Lys-151. 157 to 158 (GT) is a binding site for (S)-2,3,4,5-tetrahydrodipicolinate.

Belongs to the DapB family.

It localises to the cytoplasm. The enzyme catalyses (S)-2,3,4,5-tetrahydrodipicolinate + NAD(+) + H2O = (2S,4S)-4-hydroxy-2,3,4,5-tetrahydrodipicolinate + NADH + H(+). The catalysed reaction is (S)-2,3,4,5-tetrahydrodipicolinate + NADP(+) + H2O = (2S,4S)-4-hydroxy-2,3,4,5-tetrahydrodipicolinate + NADPH + H(+). It participates in amino-acid biosynthesis; L-lysine biosynthesis via DAP pathway; (S)-tetrahydrodipicolinate from L-aspartate: step 4/4. Its function is as follows. Catalyzes the conversion of 4-hydroxy-tetrahydrodipicolinate (HTPA) to tetrahydrodipicolinate. This is 4-hydroxy-tetrahydrodipicolinate reductase from Clostridium tetani (strain Massachusetts / E88).